A 202-amino-acid polypeptide reads, in one-letter code: Protein Thf1 (202 aa).

The stretch at 174 to 202 (IYKSSILKMEQAKELLQEAKIKDKKEKKK) forms a coiled coil.

This sequence belongs to the THF1 family.

Functionally, may be involved in photosynthetic membrane biogenesis. This is Protein Thf1 from Prochlorococcus marinus subsp. pastoris (strain CCMP1986 / NIES-2087 / MED4).